The primary structure comprises 328 residues: GMP reductase (328 aa).

Residue cysteine 176 is the Thioimidate intermediate of the active site. Position 205-228 (205-228) interacts with NADP(+); sequence IIADGGIRTHGDIAKSIRFGASMI.

Belongs to the IMPDH/GMPR family. GuaC type 2 subfamily.

It catalyses the reaction IMP + NH4(+) + NADP(+) = GMP + NADPH + 2 H(+). Catalyzes the irreversible NADPH-dependent deamination of GMP to IMP. It functions in the conversion of nucleobase, nucleoside and nucleotide derivatives of G to A nucleotides, and in maintaining the intracellular balance of A and G nucleotides. In Streptococcus pneumoniae serotype 2 (strain D39 / NCTC 7466), this protein is GMP reductase.